The sequence spans 286 residues: 4-diphosphocytidyl-2-C-methyl-D-erythritol kinase (286 aa).

Lys-11 is a catalytic residue. 94 to 104 (PMGGGIGGGSS) serves as a coordination point for ATP. Asp-136 is a catalytic residue.

This sequence belongs to the GHMP kinase family. IspE subfamily.

The catalysed reaction is 4-CDP-2-C-methyl-D-erythritol + ATP = 4-CDP-2-C-methyl-D-erythritol 2-phosphate + ADP + H(+). It functions in the pathway isoprenoid biosynthesis; isopentenyl diphosphate biosynthesis via DXP pathway; isopentenyl diphosphate from 1-deoxy-D-xylulose 5-phosphate: step 3/6. Functionally, catalyzes the phosphorylation of the position 2 hydroxy group of 4-diphosphocytidyl-2C-methyl-D-erythritol. This is 4-diphosphocytidyl-2-C-methyl-D-erythritol kinase from Pseudomonas putida (strain ATCC 47054 / DSM 6125 / CFBP 8728 / NCIMB 11950 / KT2440).